Consider the following 158-residue polypeptide: Transcription elongation factor GreA (158 aa).

Residues 45–72 (AEYHAAREQQSFIEGRIKQLEGELSHAE) adopt a coiled-coil conformation.

Belongs to the GreA/GreB family.

Functionally, necessary for efficient RNA polymerase transcription elongation past template-encoded arresting sites. The arresting sites in DNA have the property of trapping a certain fraction of elongating RNA polymerases that pass through, resulting in locked ternary complexes. Cleavage of the nascent transcript by cleavage factors such as GreA or GreB allows the resumption of elongation from the new 3'terminus. GreA releases sequences of 2 to 3 nucleotides. The protein is Transcription elongation factor GreA of Xanthomonas campestris pv. campestris (strain ATCC 33913 / DSM 3586 / NCPPB 528 / LMG 568 / P 25).